Consider the following 349-residue polypeptide: Thiamine thiazole synthase, chloroplastic (349 aa).

A chloroplast-targeting transit peptide spans 1–45; that stretch reads MAAIASTLSLSSTKPQRLFDSSFHGSAISAAPISIGLKPRSFSVR. Residues Ala-94, 114–115, Gly-122, and Ala-187 each bind substrate; that span reads EQ. A 2,3-didehydroalanine (Cys) modification is found at Cys-216. Residues Asp-218, His-233, Met-285, and 295–297 contribute to the substrate site; that span reads RMG.

The protein belongs to the THI4 family. As to quaternary structure, homooctamer. Interacts with RBCX1 and RBCX1. Interacts with CPK33. Requires Fe cation as cofactor. Post-translationally, during the catalytic reaction, a sulfide is transferred from Cys-216 to a reaction intermediate, generating a dehydroalanine residue. Not phosphorylated in vitro by CPK33. As to expression, expressed at high levels in chloroplast-containing parenchymatic cells of leaves, inflorescence shoots and flowers, and at lower levels in the vascular system. In young plants, detected in roots and shoots including cotyledons, leaves and hypocotyls. Also observed in apical meristematic regions, siliques and embryos. Low expression in roots, limited to the vascular tissue. Broadly expressed in roots, cotyledons, leaves, hypocotyls, inflorescences, siliques, and strongly in guard cells.

The protein localises to the plastid. It localises to the chloroplast. It is found in the mitochondrion. Its subcellular location is the cell membrane. It carries out the reaction [ADP-thiazole synthase]-L-cysteine + glycine + NAD(+) = [ADP-thiazole synthase]-dehydroalanine + ADP-5-ethyl-4-methylthiazole-2-carboxylate + nicotinamide + 3 H2O + 2 H(+). Functionally, involved in biosynthesis of the thiamine precursor thiazole. Catalyzes the conversion of NAD and glycine to adenosine diphosphate 5-(2-hydroxyethyl)-4-methylthiazole-2-carboxylic acid (ADT), an adenylated thiazole intermediate. The reaction includes an iron-dependent sulfide transfer from a conserved cysteine residue of the protein to a thiazole intermediate. The enzyme can only undergo a single turnover, which suggests it is a suicide enzyme. May have additional roles in adaptation to various stress conditions and in DNA damage tolerance. Acts as a positive regulator for the abscisic acid-induced activation of slow type anion channels during stomatal closure by repressing CPK33 kinase activity. The chain is Thiamine thiazole synthase, chloroplastic from Arabidopsis thaliana (Mouse-ear cress).